The sequence spans 256 residues: Exosome complex component RRP41-like (256 aa).

It belongs to the RNase PH family. In terms of assembly, probable component of the RNA exosome complex. As to expression, highly expressed in imbibed seeds and young seedlings.

It is found in the cytoplasm. It localises to the nucleus. Non-catalytic component of the RNA exosome complex which has 3'-&gt;5' exoribonuclease activity and participates in a multitude of cellular RNA processing, maturation and degradation events. In vitro, is a processive phosphorolytic exonuclease and requires a single-stranded poly(A) tail on the substrate RNA for its activity. Plays an important role in seed germination and early seedling growth by mediating specific cytoplasmic mRNA decay of transcripts coding for the abscisic acid (ABA) biosynthetic enzymes NCED5 and NCED6, and the ABA signaling transcription factors ABI3 and ABI4. This chain is Exosome complex component RRP41-like, found in Arabidopsis thaliana (Mouse-ear cress).